The chain runs to 569 residues: Proline--tRNA ligase (569 aa).

Belongs to the class-II aminoacyl-tRNA synthetase family. ProS type 1 subfamily. Homodimer.

The protein resides in the cytoplasm. It carries out the reaction tRNA(Pro) + L-proline + ATP = L-prolyl-tRNA(Pro) + AMP + diphosphate. Functionally, catalyzes the attachment of proline to tRNA(Pro) in a two-step reaction: proline is first activated by ATP to form Pro-AMP and then transferred to the acceptor end of tRNA(Pro). As ProRS can inadvertently accommodate and process non-cognate amino acids such as alanine and cysteine, to avoid such errors it has two additional distinct editing activities against alanine. One activity is designated as 'pretransfer' editing and involves the tRNA(Pro)-independent hydrolysis of activated Ala-AMP. The other activity is designated 'posttransfer' editing and involves deacylation of mischarged Ala-tRNA(Pro). The misacylated Cys-tRNA(Pro) is not edited by ProRS. The sequence is that of Proline--tRNA ligase from Campylobacter jejuni (strain RM1221).